Here is a 544-residue protein sequence, read N- to C-terminus: Cytochrome P450 2U1 (544 aa).

Helical transmembrane passes span 30–50, 113–133, 261–281, and 342–362; these read LDPS…GWSW, VYGS…LSDF, ICLN…YLPF, and LFYI…NSLL. C490 provides a ligand contact to heme. The chain crosses the membrane as a helical span at residues 495-515; it reads LAKMELFLMFVSLMQSFAFAL.

The protein belongs to the cytochrome P450 family. Heme serves as cofactor. Widely expressed with stronger expression in thymus, heart and cerebellum.

The protein resides in the endoplasmic reticulum membrane. Its subcellular location is the microsome membrane. It is found in the mitochondrion inner membrane. It carries out the reaction an omega-methyl-long-chain fatty acid + reduced [NADPH--hemoprotein reductase] + O2 = an omega-hydroxy-long-chain fatty acid + oxidized [NADPH--hemoprotein reductase] + H2O + H(+). The enzyme catalyses (5Z,8Z,11Z,14Z)-eicosatetraenoate + reduced [NADPH--hemoprotein reductase] + O2 = 19-hydroxy-(5Z,8Z,11Z,14Z)-eicosatetraenoate + oxidized [NADPH--hemoprotein reductase] + H2O + H(+). The catalysed reaction is (5Z,8Z,11Z,14Z)-eicosatetraenoate + reduced [NADPH--hemoprotein reductase] + O2 = 20-hydroxy-(5Z,8Z,11Z,14Z)-eicosatetraenoate + oxidized [NADPH--hemoprotein reductase] + H2O + H(+). It catalyses the reaction N-[(5Z,8Z,11Z,14Z)-eicosatetraenoyl]-serotonin + reduced [NADPH--hemoprotein reductase] + O2 = 2-oxo-N-[(5Z,8Z,11Z,14Z)-eicosatetraenoyl]-serotonin + oxidized [NADPH--hemoprotein reductase] + H2O + H(+). It functions in the pathway lipid metabolism; arachidonate metabolism. A cytochrome P450 monooxygenase involved in the metabolism of arachidonic acid and its conjugates. Mechanistically, uses molecular oxygen inserting one oxygen atom into a substrate, and reducing the second into a water molecule, with two electrons provided by NADPH via cytochrome P450 reductase (CPR; NADPH-ferrihemoprotein reductase). Acts as an omega and omega-1 hydroxylase for arachidonic acid and possibly for other long chain fatty acids. May modulate the arachidonic acid signaling pathway and play a role in other fatty acid signaling processes. May down-regulate the biological activities of N-arachidonoyl-serotonin, an endocannabinoid that has anti-nociceptive effects through inhibition of fatty acid amide hydrolase FAAH, TRPV1 receptor and T-type calcium channels. Catalyzes C-2 oxidation of the indole ring of N-arachidonoyl-serotonin forming a less active product 2-oxo-N-arachidonoyl-serotonin. The protein is Cytochrome P450 2U1 of Homo sapiens (Human).